The following is a 249-amino-acid chain: Acetate transporter protein patA (249 aa).

Transmembrane regions (helical) follow at residues 42-62, 71-91, 106-126, 141-161, 169-189, and 202-222; these read IGSP…TLSM, AITN…LVLV, VFGG…PAFG, AIGY…VAAM, GMLG…FSFA, and AAGA…GHLM.

This sequence belongs to the acetate uptake transporter (AceTr) (TC 2.A.96) family.

The protein resides in the endoplasmic reticulum membrane. It functions in the pathway mycotoxin biosynthesis; patulin biosynthesis. In terms of biological role, acetate transporter protein; part of the gene cluster that mediates the biosynthesis of patulin, an acetate-derived tetraketide mycotoxin produced by several fungal species that shows antimicrobial properties against several bacteria. May be involved in the uptake of acetate, a substrate for the synthesis of 6-methylsalicylic acid by the polyketide synthase patK. The sequence is that of Acetate transporter protein patA from Penicillium expansum (Blue mold rot fungus).